A 62-amino-acid chain; its full sequence is Large ribosomal subunit protein uL29 (62 aa).

The protein belongs to the universal ribosomal protein uL29 family.

The sequence is that of Large ribosomal subunit protein uL29 from Helicobacter hepaticus (strain ATCC 51449 / 3B1).